We begin with the raw amino-acid sequence, 204 residues long: Chaperone protein TorD (204 aa).

Belongs to the TorD/DmsD family. TorD subfamily.

The protein resides in the cytoplasm. Involved in the biogenesis of TorA. Acts on TorA before the insertion of the molybdenum cofactor and, as a result, probably favors a conformation of the apoenzyme that is competent for acquiring the cofactor. In Shewanella baltica (strain OS223), this protein is Chaperone protein TorD.